A 129-amino-acid polypeptide reads, in one-letter code: Large ribosomal subunit protein bL12 (129 aa).

It belongs to the bacterial ribosomal protein bL12 family. Homodimer. Part of the ribosomal stalk of the 50S ribosomal subunit. Forms a multimeric L10(L12)X complex, where L10 forms an elongated spine to which 2 to 4 L12 dimers bind in a sequential fashion. Binds GTP-bound translation factors.

Functionally, forms part of the ribosomal stalk which helps the ribosome interact with GTP-bound translation factors. Is thus essential for accurate translation. In Mycobacteroides abscessus (strain ATCC 19977 / DSM 44196 / CCUG 20993 / CIP 104536 / JCM 13569 / NCTC 13031 / TMC 1543 / L948) (Mycobacterium abscessus), this protein is Large ribosomal subunit protein bL12.